Here is a 138-residue protein sequence, read N- to C-terminus: Cysteine desulfuration protein SufE (138 aa).

Cys-51 acts as the Cysteine persulfide intermediate in catalysis.

The protein belongs to the SufE family. In terms of assembly, homodimer. Interacts with SufS.

It is found in the cytoplasm. Its pathway is cofactor biosynthesis; iron-sulfur cluster biosynthesis. Functionally, participates in cysteine desulfuration mediated by SufS. Cysteine desulfuration mobilizes sulfur from L-cysteine to yield L-alanine and constitutes an essential step in sulfur metabolism for biosynthesis of a variety of sulfur-containing biomolecules. Functions as a sulfur acceptor for SufS, by mediating the direct transfer of the sulfur atom from the S-sulfanylcysteine of SufS, an intermediate product of cysteine desulfuration process. The polypeptide is Cysteine desulfuration protein SufE (Pectobacterium carotovorum subsp. carotovorum (strain PC1)).